The chain runs to 336 residues: Thiamine thiazole synthase (336 aa).

Substrate contacts are provided by residues Ala-89, 110-111 (ES), Gly-118, and Cys-183. Cys-219 carries the 2,3-didehydroalanine (Cys) modification. Substrate contacts are provided by residues Asp-221, His-236, Met-288, and 298–300 (RMG).

The protein belongs to the THI4 family. Homooctamer. It depends on Fe cation as a cofactor. During the catalytic reaction, a sulfide is transferred from Cys-219 to a reaction intermediate, generating a dehydroalanine residue.

It is found in the cytoplasm. The protein localises to the nucleus. It carries out the reaction [ADP-thiazole synthase]-L-cysteine + glycine + NAD(+) = [ADP-thiazole synthase]-dehydroalanine + ADP-5-ethyl-4-methylthiazole-2-carboxylate + nicotinamide + 3 H2O + 2 H(+). In terms of biological role, involved in biosynthesis of the thiamine precursor thiazole. Catalyzes the conversion of NAD and glycine to adenosine diphosphate 5-(2-hydroxyethyl)-4-methylthiazole-2-carboxylic acid (ADT), an adenylated thiazole intermediate. The reaction includes an iron-dependent sulfide transfer from a conserved cysteine residue of the protein to a thiazole intermediate. The enzyme can only undergo a single turnover, which suggests it is a suicide enzyme. May have additional roles in adaptation to various stress conditions and in DNA damage tolerance. The polypeptide is Thiamine thiazole synthase (Puccinia graminis f. sp. tritici (strain CRL 75-36-700-3 / race SCCL) (Black stem rust fungus)).